The chain runs to 210 residues: Protein-methionine-sulfoxide reductase heme-binding subunit MsrQ (210 aa).

6 helical membrane passes run 8-28 (LAVF…AWIF), 37-57 (VLVE…LAMT), 75-95 (LGLW…LFIL), 110-130 (PYII…VTSN), 147-167 (LVYV…RADL), and 169-189 (EWAL…PMIA).

The protein belongs to the MsrQ family. Heterodimer of a catalytic subunit (MsrP) and a heme-binding subunit (MsrQ). The cofactor is FMN. Requires heme b as cofactor.

It localises to the cell inner membrane. Functionally, part of the MsrPQ system that repairs oxidized periplasmic proteins containing methionine sulfoxide residues (Met-O), using respiratory chain electrons. Thus protects these proteins from oxidative-stress damage caused by reactive species of oxygen and chlorine generated by the host defense mechanisms. MsrPQ is essential for the maintenance of envelope integrity under bleach stress, rescuing a wide series of structurally unrelated periplasmic proteins from methionine oxidation. MsrQ provides electrons for reduction to the reductase catalytic subunit MsrP, using the quinone pool of the respiratory chain. The protein is Protein-methionine-sulfoxide reductase heme-binding subunit MsrQ of Pseudomonas syringae pv. tomato (strain ATCC BAA-871 / DC3000).